We begin with the raw amino-acid sequence, 37 residues long: Mastoparan-VT (37 aa).

The propeptide occupies 1-22 (EALADPIADPVAGPNPEADPEA). AXPX repeat units follow at residues 4–7 (ADPI), 8–11 (ADPV), 12–15 (AGPN), and 18–21 (ADPE). Leucine amide is present on L36.

The protein belongs to the MCD family. Mastoparan subfamily. Expressed by the venom gland.

The protein resides in the secreted. It is found in the target cell membrane. Antimicrobial peptide with potent activity against both Gram-positive (S.aureus MIC=50 ug/ml, and B.subtilis MIC=25 ug/ml) and Gram-negative bacteria (P.aeruginosa MIC=25 ug/ml, E.coli MIC=3-50 ug/ml, K.pneumoniae MIC=25 ug/ml). Exhibits little hemolytic activity on human erythrocytes. This is Mastoparan-VT from Vespa tropica (Greater banded hornet).